The following is a 120-amino-acid chain: Small ribosomal subunit protein uS17m (120 aa).

Residues 1–20 constitute a mitochondrion transit peptide; it reads MSIVRSSVHAKWVVGKVIGT.

It belongs to the universal ribosomal protein uS17 family. In terms of assembly, component of the mitochondrial ribosome small subunit (28S) which comprises a 12S rRNA and about 30 distinct proteins.

It is found in the mitochondrion. The polypeptide is Small ribosomal subunit protein uS17m (Mrps17) (Mus musculus (Mouse)).